Consider the following 62-residue polypeptide: Photosystem II reaction center protein Z (62 aa).

Helical transmembrane passes span 8–28 and 41–61; these read TLFA…VVFA and FSGV…NSFV.

The protein belongs to the PsbZ family. PSII is composed of 1 copy each of membrane proteins PsbA, PsbB, PsbC, PsbD, PsbE, PsbF, PsbH, PsbI, PsbJ, PsbK, PsbL, PsbM, PsbT, PsbY, PsbZ, Psb30/Ycf12, at least 3 peripheral proteins of the oxygen-evolving complex and a large number of cofactors. It forms dimeric complexes.

The protein localises to the plastid. The protein resides in the chloroplast thylakoid membrane. May control the interaction of photosystem II (PSII) cores with the light-harvesting antenna, regulates electron flow through the 2 photosystem reaction centers. PSII is a light-driven water plastoquinone oxidoreductase, using light energy to abstract electrons from H(2)O, generating a proton gradient subsequently used for ATP formation. The protein is Photosystem II reaction center protein Z of Oltmannsiellopsis viridis (Marine flagellate).